We begin with the raw amino-acid sequence, 780 residues long: Alpha-xylosidase (780 aa).

N-linked (GlcNAc...) asparagine glycosylation is found at asparagine 48, asparagine 84, asparagine 247, and asparagine 298. Residues aspartate 434 and glutamate 437 contribute to the active site. Asparagine 443 is a glycosylation site (N-linked (GlcNAc...) asparagine). Aspartate 501 serves as the catalytic Proton donor. An N-linked (GlcNAc...) asparagine glycan is attached at asparagine 718.

Belongs to the glycosyl hydrolase 31 family.

It is found in the secreted. The catalysed reaction is Hydrolysis of terminal, non-reducing alpha-D-xylose residues with release of alpha-D-xylose.. Functionally, catalyzes the liberation of alpha-xylose from the non-reducing terminal glucose of xyloglucan oligosaccharides. The polypeptide is Alpha-xylosidase (Emericella nidulans (strain FGSC A4 / ATCC 38163 / CBS 112.46 / NRRL 194 / M139) (Aspergillus nidulans)).